Reading from the N-terminus, the 176-residue chain is NAD(P)H-quinone oxidoreductase subunit 6, chloroplastic (176 aa).

5 consecutive transmembrane segments (helical) span residues 10-30 (FLLV…VLLP), 32-52 (PIFS…LYIL), 61-81 (AQLL…VMFM), 92-112 (LWTV…FLLM), and 152-172 (FFLP…GAIS).

It belongs to the complex I subunit 6 family. NDH is composed of at least 16 different subunits, 5 of which are encoded in the nucleus.

It localises to the plastid. Its subcellular location is the chloroplast thylakoid membrane. It carries out the reaction a plastoquinone + NADH + (n+1) H(+)(in) = a plastoquinol + NAD(+) + n H(+)(out). It catalyses the reaction a plastoquinone + NADPH + (n+1) H(+)(in) = a plastoquinol + NADP(+) + n H(+)(out). Functionally, NDH shuttles electrons from NAD(P)H:plastoquinone, via FMN and iron-sulfur (Fe-S) centers, to quinones in the photosynthetic chain and possibly in a chloroplast respiratory chain. The immediate electron acceptor for the enzyme in this species is believed to be plastoquinone. Couples the redox reaction to proton translocation, and thus conserves the redox energy in a proton gradient. The sequence is that of NAD(P)H-quinone oxidoreductase subunit 6, chloroplastic (ndhG) from Olimarabidopsis pumila (Dwarf rocket).